A 179-amino-acid polypeptide reads, in one-letter code: Large ribosomal subunit protein uL5 (179 aa).

Belongs to the universal ribosomal protein uL5 family. Part of the 50S ribosomal subunit; contacts the 5S rRNA and probably tRNA. Forms a bridge to the 30S subunit in the 70S ribosome.

In terms of biological role, this is one of the proteins that bind and probably mediate the attachment of the 5S RNA into the large ribosomal subunit, where it forms part of the central protuberance. In the 70S ribosome it contacts protein S13 of the 30S subunit (bridge B1b), connecting the 2 subunits; this bridge is implicated in subunit movement. May contact the P site tRNA; the 5S rRNA and some of its associated proteins might help stabilize positioning of ribosome-bound tRNAs. The protein is Large ribosomal subunit protein uL5 of Pyrobaculum aerophilum (strain ATCC 51768 / DSM 7523 / JCM 9630 / CIP 104966 / NBRC 100827 / IM2).